A 438-amino-acid chain; its full sequence is 23S rRNA (uracil(1939)-C(5))-methyltransferase RlmD (438 aa).

The 59-residue stretch at 10 to 68 (KTKNVQTITADILDLDYQGLGVAKINGKTWFIENALPHEKVECRILEDKRQYGHAIVKK) folds into the TRAM domain. Cysteine 81, cysteine 87, cysteine 90, and cysteine 168 together coordinate [4Fe-4S] cluster. Glutamine 271, phenylalanine 300, asparagine 305, glutamate 321, aspartate 348, and aspartate 369 together coordinate S-adenosyl-L-methionine. Residue cysteine 395 is the Nucleophile of the active site.

Belongs to the class I-like SAM-binding methyltransferase superfamily. RNA M5U methyltransferase family. RlmD subfamily.

It catalyses the reaction uridine(1939) in 23S rRNA + S-adenosyl-L-methionine = 5-methyluridine(1939) in 23S rRNA + S-adenosyl-L-homocysteine + H(+). Its function is as follows. Catalyzes the formation of 5-methyl-uridine at position 1939 (m5U1939) in 23S rRNA. The protein is 23S rRNA (uracil(1939)-C(5))-methyltransferase RlmD of Haemophilus influenzae (strain ATCC 51907 / DSM 11121 / KW20 / Rd).